Here is a 446-residue protein sequence, read N- to C-terminus: Tubulin beta-6 chain (446 aa).

GTP is bound by residues Gln-11, Glu-69, Ser-138, Gly-142, Thr-143, Gly-144, Asn-204, and Asn-226. Residue Glu-69 coordinates Mg(2+). The disordered stretch occupies residues 426 to 446; the sequence is QDATADEEEYEDEEEVQADDM. The span at 429 to 446 shows a compositional bias: acidic residues; it reads TADEEEYEDEEEVQADDM.

This sequence belongs to the tubulin family. In terms of assembly, dimer of alpha and beta chains. A typical microtubule is a hollow water-filled tube with an outer diameter of 25 nm and an inner diameter of 15 nM. Alpha-beta heterodimers associate head-to-tail to form protofilaments running lengthwise along the microtubule wall with the beta-tubulin subunit facing the microtubule plus end conferring a structural polarity. Microtubules usually have 13 protofilaments but different protofilament numbers can be found in some organisms and specialized cells. Mg(2+) serves as cofactor.

The protein resides in the cytoplasm. It localises to the cytoskeleton. Its function is as follows. Tubulin is the major constituent of microtubules, a cylinder consisting of laterally associated linear protofilaments composed of alpha- and beta-tubulin heterodimers. Microtubules grow by the addition of GTP-tubulin dimers to the microtubule end, where a stabilizing cap forms. Below the cap, tubulin dimers are in GDP-bound state, owing to GTPase activity of alpha-tubulin. The polypeptide is Tubulin beta-6 chain (TUBB6) (Zea mays (Maize)).